A 78-amino-acid polypeptide reads, in one-letter code: Exodeoxyribonuclease 7 small subunit (78 aa).

The protein belongs to the XseB family. Heterooligomer composed of large and small subunits.

The protein resides in the cytoplasm. It carries out the reaction Exonucleolytic cleavage in either 5'- to 3'- or 3'- to 5'-direction to yield nucleoside 5'-phosphates.. Bidirectionally degrades single-stranded DNA into large acid-insoluble oligonucleotides, which are then degraded further into small acid-soluble oligonucleotides. The chain is Exodeoxyribonuclease 7 small subunit from Idiomarina loihiensis (strain ATCC BAA-735 / DSM 15497 / L2-TR).